Consider the following 152-residue polypeptide: Protein SprT-like (152 aa).

Residues 7–147 (QRLVEEVSLQ…CGKCKGKLKP (141 aa)) form the SprT-like domain. His-67 is a binding site for Zn(2+). Glu-68 is a catalytic residue. Position 71 (His-71) interacts with Zn(2+).

The protein belongs to the SprT family. Requires Zn(2+) as cofactor.

The protein resides in the cytoplasm. This chain is Protein SprT-like, found in Bacillus cereus (strain B4264).